The primary structure comprises 526 residues: Serine/threonine-protein kinase ppk22 (526 aa).

Disordered stretches follow at residues 1 to 24 (MARE…QSHF) and 39 to 106 (AATV…PRPL). Positions 10 to 23 (KSPSSTDDGMSQSH) are enriched in polar residues. Positions 65–78 (NQLNELDLNDSSDQ) are enriched in low complexity. S154 is modified (phosphoserine). Residues 155–445 (FEKIRLLGQG…ASDIKQHPFF (291 aa)) form the Protein kinase domain. ATP-binding positions include 161 to 169 (LGQGDVGKV) and K184. The Proton acceptor role is filled by D280. T339 bears the Phosphothreonine mark. Position 341 is a phosphoserine (S341). Y348 carries the post-translational modification Phosphotyrosine. In terms of domain architecture, AGC-kinase C-terminal spans 446–526 (RHIQWALLRS…SVTLHHAGDE (81 aa)). Positions 499–526 (MHSSTPVNEQSNPFDSFSSVTLHHAGDE) are disordered. Residues 500-519 (HSSTPVNEQSNPFDSFSSVT) are compositionally biased toward polar residues.

Belongs to the protein kinase superfamily. AGC Ser/Thr protein kinase family.

Its subcellular location is the cytoplasm. The enzyme catalyses L-seryl-[protein] + ATP = O-phospho-L-seryl-[protein] + ADP + H(+). It catalyses the reaction L-threonyl-[protein] + ATP = O-phospho-L-threonyl-[protein] + ADP + H(+). This is Serine/threonine-protein kinase ppk22 (ppk22) from Schizosaccharomyces pombe (strain 972 / ATCC 24843) (Fission yeast).